A 336-amino-acid polypeptide reads, in one-letter code: tRNA N6-adenosine threonylcarbamoyltransferase (336 aa).

Fe cation-binding residues include His108 and His112. Substrate is bound by residues 129 to 133 (LISGG), Asp161, Glu178, and Ser258. A Fe cation-binding site is contributed by Asp286.

The protein belongs to the KAE1 / TsaD family. It depends on Fe(2+) as a cofactor.

It localises to the cytoplasm. It catalyses the reaction L-threonylcarbamoyladenylate + adenosine(37) in tRNA = N(6)-L-threonylcarbamoyladenosine(37) in tRNA + AMP + H(+). Required for the formation of a threonylcarbamoyl group on adenosine at position 37 (t(6)A37) in tRNAs that read codons beginning with adenine. Is probably involved in the transfer of the threonylcarbamoyl moiety of threonylcarbamoyl-AMP (TC-AMP) to the N6 group of A37. This chain is tRNA N6-adenosine threonylcarbamoyltransferase, found in Pyrobaculum neutrophilum (strain DSM 2338 / JCM 9278 / NBRC 100436 / V24Sta) (Thermoproteus neutrophilus).